Reading from the N-terminus, the 190-residue chain is MVRVVPLTDEEKMSIVSGLRSSVPATKLVTLRKLQEIAEVRPEAILYLDTYDKVTLNEIITLLNQIIEYDPDEILRREAMITLEKVKKALGTKFSTFVPLCNSCKSPIDLGWTYCTNCGAEIKNMTFEEEVERCPNCNNYISDSWKYCAHCGAKLKEEEEEVLRCPNCKRPVQPEWIVCPYCGYRLKRKP.

The segment at 134-183 (CPNCNNYISDSWKYCAHCGAKLKEEEEEVLRCPNCKRPVQPEWIVCPYCG) adopts a DZANK-type zinc-finger fold.

In Methanocaldococcus jannaschii (strain ATCC 43067 / DSM 2661 / JAL-1 / JCM 10045 / NBRC 100440) (Methanococcus jannaschii), this protein is Double zinc ribbon protein MJ0416.